Consider the following 545-residue polypeptide: B3 domain-containing protein Os03g0620500 (545 aa).

The TF-B3 1 DNA-binding region spans 26 to 119 (MKCFHRQMSA…RRASGVQERN (94 aa)). The tract at residues 111-188 (RASGVQERNA…SSSEHESSYD (78 aa)) is disordered. Positions 173–186 (EEAKESSSSEHESS) are enriched in basic and acidic residues. A DNA-binding region (TF-B3 2) is located at residues 231–331 (VTTMKHSNVN…RATVHLLRET (101 aa)). Positions 368 to 400 (RRGTMEPSTTNVKKEADNEQCNNGQGKRQEPLN) are disordered. The segment at residues 441 to 542 (YVSIMNKSNV…AMKVHIIRHN (102 aa)) is a DNA-binding region (TF-B3 3).

It is found in the nucleus. This is B3 domain-containing protein Os03g0620500 from Oryza sativa subsp. japonica (Rice).